The chain runs to 525 residues: GMP synthase [glutamine-hydrolyzing] (525 aa).

One can recognise a Glutamine amidotransferase type-1 domain in the interval 9–207 (RILILDFGSQ…VLDICGCAAL (199 aa)). Catalysis depends on cysteine 86, which acts as the Nucleophile. Catalysis depends on residues histidine 181 and glutamate 183. The GMPS ATP-PPase domain occupies 208-400 (WTPSNIVDDA…LGLPYDMVYR (193 aa)). 235 to 241 (SGGVDSS) is a binding site for ATP.

As to quaternary structure, homodimer.

It catalyses the reaction XMP + L-glutamine + ATP + H2O = GMP + L-glutamate + AMP + diphosphate + 2 H(+). It functions in the pathway purine metabolism; GMP biosynthesis; GMP from XMP (L-Gln route): step 1/1. Catalyzes the synthesis of GMP from XMP. In Pseudomonas aeruginosa (strain UCBPP-PA14), this protein is GMP synthase [glutamine-hydrolyzing].